The sequence spans 380 residues: Cytochrome b (380 aa).

4 consecutive transmembrane segments (helical) span residues 34–54 (FGSL…LLAA), 78–99 (WLIR…YLHI), 114–134 (WNTG…GYVL), and 179–199 (FFAL…IHLT). Heme b-binding residues include histidine 84 and histidine 98. The heme b site is built by histidine 183 and histidine 197. Histidine 202 contacts a ubiquinone. A run of 4 helical transmembrane segments spans residues 227–247 (LKDI…ALFS), 289–309 (LGGV…PFLH), 321–341 (LSQL…WVGS), and 348–368 (FIII…VLFP).

Belongs to the cytochrome b family. In terms of assembly, the cytochrome bc1 complex contains 11 subunits: 3 respiratory subunits (MT-CYB, CYC1 and UQCRFS1), 2 core proteins (UQCRC1 and UQCRC2) and 6 low-molecular weight proteins (UQCRH/QCR6, UQCRB/QCR7, UQCRQ/QCR8, UQCR10/QCR9, UQCR11/QCR10 and a cleavage product of UQCRFS1). This cytochrome bc1 complex then forms a dimer. Heme b serves as cofactor.

It localises to the mitochondrion inner membrane. Component of the ubiquinol-cytochrome c reductase complex (complex III or cytochrome b-c1 complex) that is part of the mitochondrial respiratory chain. The b-c1 complex mediates electron transfer from ubiquinol to cytochrome c. Contributes to the generation of a proton gradient across the mitochondrial membrane that is then used for ATP synthesis. The polypeptide is Cytochrome b (MT-CYB) (Pharomachrus antisianus (Crested quetzal)).